Here is a 514-residue protein sequence, read N- to C-terminus: Cholesterol side-chain cleavage enzyme, mitochondrial (514 aa).

A mitochondrion-targeting transit peptide spans 1–39 (MMVSWSVCRSSLALPACGLPSARHNSSMPVVRQALSPDN). Cys458 contacts heme.

The protein belongs to the cytochrome P450 family. Heme serves as cofactor. In the ovary, not found in early vitellogenic follicles, barely detected in postvitellogenic follicles and abundant in post-ovulatory follicles.

The protein localises to the mitochondrion inner membrane. It catalyses the reaction 6 reduced [adrenodoxin] + cholesterol + 3 O2 + 6 H(+) = 4-methylpentanal + pregnenolone + 6 oxidized [adrenodoxin] + 4 H2O. The protein operates within lipid metabolism; C21-steroid hormone metabolism. Its function is as follows. Catalyzes the side-chain cleavage reaction of cholesterol to pregnenolone, the precursor of most steroid hormones. The chain is Cholesterol side-chain cleavage enzyme, mitochondrial (cyp11a1) from Oncorhynchus mykiss (Rainbow trout).